The primary structure comprises 315 residues: Thymidylate synthase (315 aa).

DUMP is bound by residues Arg22 and Arg177–Arg178. The active-site Nucleophile is the Cys197. Residues Arg217 to Asp220, Asn228, and His258 to Tyr260 contribute to the dUMP site. Asp220 is a binding site for (6R)-5,10-methylene-5,6,7,8-tetrahydrofolate. Ala314 serves as a coordination point for (6R)-5,10-methylene-5,6,7,8-tetrahydrofolate.

This sequence belongs to the thymidylate synthase family. Bacterial-type ThyA subfamily. Homodimer.

Its subcellular location is the cytoplasm. The catalysed reaction is dUMP + (6R)-5,10-methylene-5,6,7,8-tetrahydrofolate = 7,8-dihydrofolate + dTMP. Its pathway is pyrimidine metabolism; dTTP biosynthesis. Its function is as follows. Catalyzes the reductive methylation of 2'-deoxyuridine-5'-monophosphate (dUMP) to 2'-deoxythymidine-5'-monophosphate (dTMP) while utilizing 5,10-methylenetetrahydrofolate (mTHF) as the methyl donor and reductant in the reaction, yielding dihydrofolate (DHF) as a by-product. This enzymatic reaction provides an intracellular de novo source of dTMP, an essential precursor for DNA biosynthesis. The polypeptide is Thymidylate synthase (Enterococcus faecalis (strain ATCC 700802 / V583)).